Reading from the N-terminus, the 197-residue chain is Xanthine phosphoribosyltransferase (197 aa).

Xanthine contacts are provided by Leu20 and Asn27. Position 128-132 (128-132) interacts with 5-phospho-alpha-D-ribose 1-diphosphate; it reads ANGQA. Lys156 is a xanthine binding site.

Belongs to the purine/pyrimidine phosphoribosyltransferase family. Xpt subfamily. As to quaternary structure, homodimer.

It localises to the cytoplasm. It carries out the reaction XMP + diphosphate = xanthine + 5-phospho-alpha-D-ribose 1-diphosphate. Its pathway is purine metabolism; XMP biosynthesis via salvage pathway; XMP from xanthine: step 1/1. Its function is as follows. Converts the preformed base xanthine, a product of nucleic acid breakdown, to xanthosine 5'-monophosphate (XMP), so it can be reused for RNA or DNA synthesis. This Bacillus cereus (strain ATCC 10987 / NRS 248) protein is Xanthine phosphoribosyltransferase.